Reading from the N-terminus, the 431-residue chain is Cytochrome c oxidase subunit 3 (431 aa).

A run of 7 helical transmembrane segments spans residues 70 to 90 (IAPLAVTLPLAFFVLNYFGVI), 96 to 116 (FVIALSSFIGGLTIWAISIVF), 132 to 152 (LVMGMMMFIISEIMFFFSFFW), 176 to 196 (VYSYMGLPLLNTVLLLLSGAI), 321 to 341 (LYFTLVCAVVFLFCQGYEYYF), 356 to 376 (FLLTGFHGFHVLVGSILIGII), and 408 to 428 (LFYWHFVDIVWIFLYIVIYWW).

It belongs to the cytochrome c oxidase subunit 3 family. As to quaternary structure, component of the cytochrome c oxidase (complex IV, CIV), a multisubunit enzyme composed of a catalytic core of 3 subunits and several supernumerary subunits. The complex exists as a monomer or a dimer and forms supercomplexes (SCs) in the inner mitochondrial membrane with ubiquinol-cytochrome c oxidoreductase (cytochrome b-c1 complex, complex III, CIII).

It is found in the mitochondrion inner membrane. It carries out the reaction 4 Fe(II)-[cytochrome c] + O2 + 8 H(+)(in) = 4 Fe(III)-[cytochrome c] + 2 H2O + 4 H(+)(out). Functionally, component of the cytochrome c oxidase, the last enzyme in the mitochondrial electron transport chain which drives oxidative phosphorylation. The respiratory chain contains 3 multisubunit complexes succinate dehydrogenase (complex II, CII), ubiquinol-cytochrome c oxidoreductase (cytochrome b-c1 complex, complex III, CIII) and cytochrome c oxidase (complex IV, CIV), that cooperate to transfer electrons derived from NADH and succinate to molecular oxygen, creating an electrochemical gradient over the inner membrane that drives transmembrane transport and the ATP synthase. Cytochrome c oxidase is the component of the respiratory chain that catalyzes the reduction of oxygen to water. Electrons originating from reduced cytochrome c in the intermembrane space (IMS) are transferred via the dinuclear copper A center (CU(A)) of subunit 2 and heme A of subunit 1 to the active site in subunit 1, a binuclear center (BNC) formed by heme A3 and copper B (CU(B)). The BNC reduces molecular oxygen to 2 water molecules using 4 electrons from cytochrome c in the IMS and 4 protons from the mitochondrial matrix. The chain is Cytochrome c oxidase subunit 3 (cox3) from Dictyostelium citrinum (Slime mold).